The chain runs to 503 residues: Cytochrome P450 3A9 (503 aa).

C442 contacts heme.

The protein belongs to the cytochrome P450 family. It depends on heme as a cofactor. Mainly expressed in olfactory epithelium.

Its subcellular location is the endoplasmic reticulum membrane. The protein resides in the microsome membrane. The catalysed reaction is an organic molecule + reduced [NADPH--hemoprotein reductase] + O2 = an alcohol + oxidized [NADPH--hemoprotein reductase] + H2O + H(+). Its function is as follows. This isozyme seems to be implicated in olfaction. Active in the demethylation of erythromycin as well as benzphetamine. This Rattus norvegicus (Rat) protein is Cytochrome P450 3A9 (Cyp3a9).